A 605-amino-acid chain; its full sequence is Apoptosis-inducing factor 3 (605 aa).

Positions 18–29 (VLPEKERGKEEL) are enriched in basic and acidic residues. Residues 18 to 44 (VLPEKERGKEELSASGKGSPRGYQGNG) form a disordered region. The Rieske domain maps to 70-165 (ATVCHVKDLE…VKIEKEKVTI (96 aa)). The [2Fe-2S] cluster site is built by Cys-109, His-111, Cys-128, and His-131. FAD is bound by residues 201–205 (GAGAA), Arg-235, Lys-240, Val-270, Asp-467, and Trp-514.

Belongs to the FAD-dependent oxidoreductase family.

Its subcellular location is the mitochondrion. Functionally, induces apoptosis through a caspase dependent pathway. Reduces mitochondrial membrane potential. This chain is Apoptosis-inducing factor 3 (Aifm3), found in Mus musculus (Mouse).